The primary structure comprises 258 residues: RBPJ-interacting and tubulin-associated protein 1 (258 aa).

3 disordered regions span residues 28–86, 132–182, and 195–258; these read FGSP…PRKK, TPPA…APRS, and AVPS…PPWK. Polar residues predominate over residues 71 to 81; sequence SPSSRGSTPNL. The Nuclear localization signal signature appears at 81–97; it reads LTPRKKNKYRLIGHTPS. The interval 117–145 is interaction with RBPJ/RBPSUH; it reads RTAVEDAAKLRTLFWTPPATPRGSHSPRP. The interval 145–258 is interaction with tubulin; the sequence is PRETPLRAIH…CPQKPKPPWK (114 aa). Composition is skewed to polar residues over residues 201-212 and 236-245; these read HPASTAPQTNGP and GSVSGPTTPQ.

Belongs to the RITA family. As to quaternary structure, interacts with RBPJ/RBPSUH.

Its subcellular location is the cytoplasm. It is found in the nucleus. The protein resides in the cytoskeleton. It localises to the microtubule organizing center. The protein localises to the centrosome. Its function is as follows. Tubulin-binding protein that acts as a negative regulator of Notch signaling pathway. Shuttles between the cytoplasm and the nucleus and mediates the nuclear export of RBPJ/RBPSUH, thereby preventing the interaction between RBPJ/RBPSUH and NICD product of Notch proteins (Notch intracellular domain), leading to down-regulate Notch-mediated transcription. May play a role in neurogenesis. This is RBPJ-interacting and tubulin-associated protein 1 (Rita1) from Rattus norvegicus (Rat).